Here is a 27-residue protein sequence, read N- to C-terminus: Trichocyst matrix protein T4-C (27 aa).

It belongs to the TMP family.

Its subcellular location is the trichocyst. Functionally, structural protein that crystallize inside the trichocyst matrix. The sequence is that of Trichocyst matrix protein T4-C (T4C) from Paramecium tetraurelia.